A 99-amino-acid polypeptide reads, in one-letter code: Large ribosomal subunit protein bL27 (99 aa).

A propeptide spanning residues 1–10 is cleaved from the precursor; sequence MKLIFDIQLF.

This sequence belongs to the bacterial ribosomal protein bL27 family. The N-terminus is cleaved by ribosomal processing cysteine protease Prp.

In Caldicellulosiruptor saccharolyticus (strain ATCC 43494 / DSM 8903 / Tp8T 6331), this protein is Large ribosomal subunit protein bL27.